Consider the following 27-residue polypeptide: Delta-conotoxin TxVIB (27 aa).

Disulfide bonds link cysteine 2-cysteine 17, cysteine 9-cysteine 21, and cysteine 16-cysteine 26.

Belongs to the conotoxin O1 superfamily. As to expression, expressed by the venom duct.

Its subcellular location is the secreted. Functionally, delta-conotoxins bind to site 6 of voltage-gated sodium channels (Nav) and inhibit the inactivation process. Induces membrane depolarization and spontaneous repetitive firing of neurons. In Conus textile (Cloth-of-gold cone), this protein is Delta-conotoxin TxVIB.